A 427-amino-acid chain; its full sequence is DEAD-box ATP-dependent RNA helicase 56 (427 aa).

Positions 1 to 30 (MGDARDNEAYEEELLDYEEEDEKVPDSGNK) are disordered. Over residues 9-23 (AYEEELLDYEEEDEK) the composition is skewed to acidic residues. A Q motif motif is present at residues 46–74 (SGFRDFLLKPELLRAIVDSGFEHPSEVQH). Residues 77–250 (IPQAILGMDV…KKFMQDPMEI (174 aa)) form the Helicase ATP-binding domain. 90–97 (AKSGMGKT) serves as a coordination point for ATP. Positions 197–200 (DECD) match the DECD box motif. The region spanning 278 to 423 (KLNDLLDALD…ELPEQIDTST (146 aa)) is the Helicase C-terminal domain.

This sequence belongs to the DEAD box helicase family. DECD subfamily. In terms of assembly, interacts with ALY2 and MOS11.

The protein localises to the nucleus. It catalyses the reaction ATP + H2O = ADP + phosphate + H(+). Functionally, ATP-dependent RNA helicase involved in pre-mRNA splicing. Required for the export of mRNA out of the nucleus. In addition to ssRNA and dsRNA, binds dsDNA, but not ssDNA. This Arabidopsis thaliana (Mouse-ear cress) protein is DEAD-box ATP-dependent RNA helicase 56 (RH56).